The primary structure comprises 283 residues: Thymidylate synthase (283 aa).

R22 serves as a coordination point for dUMP. Residue C160 is the Nucleophile of the active site. Residues 180 to 183 (RSCD), N191, and 221 to 223 (HIY) each bind dUMP. Position 183 (D183) interacts with (6R)-5,10-methylene-5,6,7,8-tetrahydrofolate. S282 lines the (6R)-5,10-methylene-5,6,7,8-tetrahydrofolate pocket.

This sequence belongs to the thymidylate synthase family. Bacterial-type ThyA subfamily. As to quaternary structure, homodimer.

The protein localises to the cytoplasm. The catalysed reaction is dUMP + (6R)-5,10-methylene-5,6,7,8-tetrahydrofolate = 7,8-dihydrofolate + dTMP. Its pathway is pyrimidine metabolism; dTTP biosynthesis. In terms of biological role, catalyzes the reductive methylation of 2'-deoxyuridine-5'-monophosphate (dUMP) to 2'-deoxythymidine-5'-monophosphate (dTMP) while utilizing 5,10-methylenetetrahydrofolate (mTHF) as the methyl donor and reductant in the reaction, yielding dihydrofolate (DHF) as a by-product. This enzymatic reaction provides an intracellular de novo source of dTMP, an essential precursor for DNA biosynthesis. The polypeptide is Thymidylate synthase (Pasteurella multocida (strain Pm70)).